A 187-amino-acid chain; its full sequence is NADPH-dependent 3-demethoxyubiquinone 3-hydroxylase, mitochondrial (187 aa).

A mitochondrion-targeting transit peptide spans 1–8 (MFRVITRG). Lys-21 contacts NADH. A run of 2 repeats spans residues 28–99 (AGEL…SALL) and 100–187 (GKEG…AEKI). The tract at residues 28–187 (AGELGADRIY…KGAIAIAEKI (160 aa)) is 2 X approximate tandem repeats. The Fe cation site is built by Glu-30, Glu-60, His-63, Glu-112, Glu-148, and His-151. Lys-186 is an NADH binding site.

This sequence belongs to the COQ7 family. In terms of assembly, component of a multi-subunit COQ enzyme complex. Fe cation is required as a cofactor.

The protein resides in the mitochondrion inner membrane. It localises to the mitochondrion. It is found in the nucleus. The catalysed reaction is a 5-methoxy-2-methyl-3-(all-trans-polyprenyl)benzoquinone + NADH + O2 = a 3-demethylubiquinone + NAD(+) + H2O. It functions in the pathway cofactor biosynthesis; ubiquinone biosynthesis. Its function is as follows. Catalyzes the hydroxylation of the 5-methoxy-2-methyl-3-(all-trans-polyprenyl)benzoquinone at the C6 position and participates in the biosynthesis of ubiquinone. Catalyzes the reaction through a substrate-mediated reduction pathway, whereby NADH shuttles electrons to 5-methoxy-2-methyl-3-(all-trans-decaprenyl)benzoquinone, which then transfers the electrons to the two Fe(3+) centers. The binding of 5-methoxy-2-methyl-3-(all-trans-polyprenyl)benzoquinone (DMQn) mediates reduction of the diiron center by nicotinamide adenine dinucleotide (NADH) and initiates oxygen activation for subsequent DMQ hydroxylation. Also has a structural role in the COQ enzyme complex, stabilizing other COQ polypeptides. Involved in lifespan determination in a ubiquinone-independent manner. Plays a role in modulating mitochondrial stress responses, acting in the nucleus, perhaps via regulating gene expression, independent of its characterized mitochondrial function in ubiquinone biosynthesis. Plays a role in modulating polyribosome formation. This chain is NADPH-dependent 3-demethoxyubiquinone 3-hydroxylase, mitochondrial, found in Caenorhabditis elegans.